A 173-amino-acid polypeptide reads, in one-letter code: Ribonuclease H (173 aa).

Positions 1–20 (MKATSKAKTHPPGATAAKDP) are disordered. The RNase H type-1 domain maps to 20-162 (PQKQVIIYTD…CDVLSKEAAG (143 aa)). Mg(2+) is bound by residues Asp29, Glu67, Asp89, and Asp154.

The protein belongs to the RNase H family. In terms of assembly, monomer. Mg(2+) serves as cofactor.

Its subcellular location is the cytoplasm. It catalyses the reaction Endonucleolytic cleavage to 5'-phosphomonoester.. Functionally, endonuclease that specifically degrades the RNA of RNA-DNA hybrids. The chain is Ribonuclease H from Syntrophus aciditrophicus (strain SB).